The following is a 282-amino-acid chain: Undecaprenyl-diphosphatase (282 aa).

A run of 7 helical transmembrane segments spans residues 39–59, 85–105, 115–135, 153–173, 196–216, 230–250, and 260–280; these read PGAAFTAIVQMGTLAAVLIYF, ATMGWMIAAGTIPIVFFGLLF, SLYWISAALIGLALILWLTEV, IGWKEALLIGVAQSIALIPGS, FSFLLSLPSVLAAALLQLYET, LLVATIAAGVVGYASIAFLIT, and FIIYRIVIGVAILGLIATGAI.

It belongs to the UppP family.

It localises to the cell inner membrane. The enzyme catalyses di-trans,octa-cis-undecaprenyl diphosphate + H2O = di-trans,octa-cis-undecaprenyl phosphate + phosphate + H(+). Catalyzes the dephosphorylation of undecaprenyl diphosphate (UPP). Confers resistance to bacitracin. The chain is Undecaprenyl-diphosphatase from Chlorobium chlorochromatii (strain CaD3).